The sequence spans 117 residues: Large ribosomal subunit protein bL19 (117 aa).

This sequence belongs to the bacterial ribosomal protein bL19 family.

In terms of biological role, this protein is located at the 30S-50S ribosomal subunit interface and may play a role in the structure and function of the aminoacyl-tRNA binding site. The chain is Large ribosomal subunit protein bL19 from Desulfosudis oleivorans (strain DSM 6200 / JCM 39069 / Hxd3) (Desulfococcus oleovorans).